We begin with the raw amino-acid sequence, 412 residues long: MKIYLVGGAVRDALLGLPVKDRDWVVVGSTPQEMLDAGYQQVGRDFPVFLHPQTHEEYALARTERKSGSGYTGFTCYAAPDVTLEDDLKRRDLTINALAQDDNGEIIDPYNGLGDLQNRLLRHVSPAFGEDPLRVLRVARFAARYAHLGFRIADETLTLMREMTHAGELEHLTPERVWKETENALTTRNPQVFFQVLRDCGALRVLFPEIDALFGVPAPARWHPEIDTGIHTLMTLSMAAMLSPQVDVRFTTLCHDLGKGLTPPELWPRHHGHGPAGVKLVEQLCQRLRVPNEIRDLARLVAEFHDLIHTFPMLNPKTIVKLFDSIDAWRKPQRVEQLALTSEADVRGRTGFESADYPQGRWLREAWEVAQSVPTKAVVEAGFKGVEIREELTRRRIAAVASWKEQRCPKPE.

ATP-binding residues include Gly8 and Arg11. CTP-binding residues include Gly8 and Arg11. Residues Asp21 and Asp23 each contribute to the Mg(2+) site. Residues Arg91, Arg137, and Arg140 each contribute to the ATP site. Arg91, Arg137, and Arg140 together coordinate CTP. In terms of domain architecture, HD spans 228-329 (TGIHTLMTLS…VKLFDSIDAW (102 aa)).

It belongs to the tRNA nucleotidyltransferase/poly(A) polymerase family. Bacterial CCA-adding enzyme type 1 subfamily. In terms of assembly, monomer. Can also form homodimers and oligomers. Mg(2+) is required as a cofactor. It depends on Ni(2+) as a cofactor.

The catalysed reaction is a tRNA precursor + 2 CTP + ATP = a tRNA with a 3' CCA end + 3 diphosphate. It catalyses the reaction a tRNA with a 3' CCA end + 2 CTP + ATP = a tRNA with a 3' CCACCA end + 3 diphosphate. Its function is as follows. Catalyzes the addition and repair of the essential 3'-terminal CCA sequence in tRNAs without using a nucleic acid template. Adds these three nucleotides in the order of C, C, and A to the tRNA nucleotide-73, using CTP and ATP as substrates and producing inorganic pyrophosphate. tRNA 3'-terminal CCA addition is required both for tRNA processing and repair. Also involved in tRNA surveillance by mediating tandem CCA addition to generate a CCACCA at the 3' terminus of unstable tRNAs. While stable tRNAs receive only 3'-terminal CCA, unstable tRNAs are marked with CCACCA and rapidly degraded. The protein is Multifunctional CCA protein of Escherichia coli O157:H7.